The following is a 688-amino-acid chain: Polyribonucleotide nucleotidyltransferase (688 aa).

Residues D484 and D490 each contribute to the Mg(2+) site. Positions 550 to 609 (PTTEIFNVAPDKIIEIIGQGGRVIREIVEKFEVKIDLNKPSGEVKIMGNKERVLKTKEFI) constitute a KH domain. Residues 626–688 (DEVLEAQVKR…NKGKIALDLA (63 aa)) enclose the S1 motif domain.

Belongs to the polyribonucleotide nucleotidyltransferase family. Mg(2+) is required as a cofactor.

The protein localises to the cytoplasm. The enzyme catalyses RNA(n+1) + phosphate = RNA(n) + a ribonucleoside 5'-diphosphate. Involved in mRNA degradation. Catalyzes the phosphorolysis of single-stranded polyribonucleotides processively in the 3'- to 5'-direction. The protein is Polyribonucleotide nucleotidyltransferase of Helicobacter acinonychis (strain Sheeba).